The primary structure comprises 436 residues: FAD-dependent monooxygenase pigN (436 aa).

FAD is bound by residues E40, G53, and R118. Residue R200 is part of the active site. Residues D316 and A329 each coordinate FAD.

The protein belongs to the paxM FAD-dependent monooxygenase family. FAD is required as a cofactor.

It participates in secondary metabolite biosynthesis. In terms of biological role, FAD-dependent monooxygenase; part of the gene cluster that mediates the biosynthesis of azaphilone pigments (MonAzPs), a complex mixture of compounds with a common azaphilone skeleton very widely used as food colorants. Within the pathway, pigN hydroxylates the benzaldehyde M7PKS-1 intermediate at C-4 to form the pyran ring. The first step of the pathway is performed by the nrPKS pigA that forms the hexaketide precursor from successive condensations of five malonyl-CoA units, with a simple acetyl-CoA starter unit. The role of esterase pigG is not clear, but it may play at most a supplementary role in the formation of the benzaldehyde produced by the pigA nrPKS. This very reactive benzaldehyde is intercepted by the pigC ketoreductase that to provide the first stable enzyme-free MonAzPs intermediate, 6-(4-hydroxy-2-oxopentyl)-3-methyl-2,4-dioxocyclohexane carbaldehyde, also known as M7PKS-1. The FAD-dependent monooxygenase pigN hydroxylates M7PKS-1 at C-4, which triggers the formation of the pyran ring. PigJ, pigK and pigD are involved in the acetylation of the pyran ring. PigJ and pigK form the two subunits of a dedicated fungal FAS that produces the side chain fatty acyl moiety of MonAzPs and pigD transfers the fatty acyl chain to the C-4 alcohol. PigM and pigO are involved in the elimination of the omega-1 alcohol. PigM acts as an O-acetyltransferase that synthesizes the putative O-11 acetyl intermediate whereas pigO eliminates acetic acid to yield an intermediate with a C10(11) double bond. The dehydration of the C-11 alcohol followed by the reduction of the C6(7) double bond by the NAD(P)H-dependent oxidoreductase pigE increases the electrophilicity of the C-5 ketone of the resulting acyl benzopyran. This in turn sets up the C-5 ketone for an intramolecular Knoevenagel aldol condensation with the C-20 enol of the side chain. This condensation affords the characteristic linear tricyclic carbon skeletons of the yellow pigments that serve as the common precursors for the classical yellow pigments monascin and ankaflavin, orange pigments rubopunctatin and monascorubrin, and red pigments ribropunctamine and monascorubramine. The FAD-dependent oxidoreductase pigF is especially invoved in the biosynthesis of orange and red pigments via desaturation of C6(7). This chain is FAD-dependent monooxygenase pigN, found in Monascus ruber (Mold).